The primary structure comprises 224 residues: Peptidyl-prolyl cis-trans isomerase CYP21-1 (224 aa).

Positions 1–27 (MRREISFLLQPRCLLLLVALTIFLVFA) are cleaved as a signal peptide. A PPIase cyclophilin-type domain is found at 50-214 (FLDVDIDGQR…KKVVIADSGE (165 aa)). Asparagine 158 is a glycosylation site (N-linked (GlcNAc...) asparagine).

The protein belongs to the cyclophilin-type PPIase family. In terms of tissue distribution, ubiquitous.

The protein resides in the endoplasmic reticulum. It catalyses the reaction [protein]-peptidylproline (omega=180) = [protein]-peptidylproline (omega=0). Its function is as follows. PPIases accelerate the folding of proteins. It catalyzes the cis-trans isomerization of proline imidic peptide bonds in oligopeptides. In Arabidopsis thaliana (Mouse-ear cress), this protein is Peptidyl-prolyl cis-trans isomerase CYP21-1 (CYP21-1).